The sequence spans 208 residues: Octanoyltransferase (208 aa).

In terms of domain architecture, BPL/LPL catalytic spans 29–208 (KTQDELVWLL…KEFNKVFCNC (180 aa)). Substrate is bound by residues 68 to 75 (RGGKYTYH), 140 to 142 (AFG), and 153 to 155 (GVS). Cys171 (acyl-thioester intermediate) is an active-site residue.

Belongs to the LipB family.

Its subcellular location is the cytoplasm. The enzyme catalyses octanoyl-[ACP] + L-lysyl-[protein] = N(6)-octanoyl-L-lysyl-[protein] + holo-[ACP] + H(+). It functions in the pathway protein modification; protein lipoylation via endogenous pathway; protein N(6)-(lipoyl)lysine from octanoyl-[acyl-carrier-protein]: step 1/2. Catalyzes the transfer of endogenously produced octanoic acid from octanoyl-acyl-carrier-protein onto the lipoyl domains of lipoate-dependent enzymes. Lipoyl-ACP can also act as a substrate although octanoyl-ACP is likely to be the physiological substrate. This Ehrlichia ruminantium (strain Gardel) protein is Octanoyltransferase.